A 54-amino-acid polypeptide reads, in one-letter code: Large ribosomal subunit protein bL33A (54 aa).

It belongs to the bacterial ribosomal protein bL33 family.

This chain is Large ribosomal subunit protein bL33A, found in Myxococcus xanthus (strain DK1622).